Reading from the N-terminus, the 449-residue chain is L-lysine-epsilon aminotransferase (449 aa).

Residues Gly128 and Ala129 each contribute to the pyridoxal 5'-phosphate site. Positions 170 and 274 each coordinate 2-oxoglutarate. Arg170 contacts L-lysine. Position 274 (Gln274) interacts with pyridoxal 5'-phosphate. Lys300 carries the N6-(pyridoxal phosphate)lysine modification. Arg422 contacts 2-oxoglutarate.

The protein belongs to the class-III pyridoxal-phosphate-dependent aminotransferase family. Pyridoxal 5'-phosphate serves as cofactor.

It carries out the reaction L-lysine + 2-oxoglutarate = (S)-2-amino-6-oxohexanoate + L-glutamate. In terms of biological role, catalyzes the transfer of the terminal amino group of L-lysine to alpha-ketoglutarate to yield L-glutamate and 2-aminoadipate 6-semialdehyde ((S)-2-amino-6-oxohexanoate), which is spontaneously converted to the dehydrated form 1-piperideine 6-carboxylate. This is L-lysine-epsilon aminotransferase from Mycobacterium bovis (strain ATCC BAA-935 / AF2122/97).